A 340-amino-acid chain; its full sequence is MLSLSKNWNTLIKPNRVTYENFPETNNKAKIIVEPLERGFGLTLGNAMRRVLLSSLQGAAITSIKIPAIEHEFSSIPGVQEDVSEVILNIKGIEVKMHVSEKRIMKLKATGPCVVTAGMIDTGHDVEILNPNHVICNLAKNKQLEMELTCKVGKGYVLSTNSYEDNLPIGEIAIDALFNPVKSVTYKVENTRVGQVTDYDKLIIFVETNGDVLPEMAVGLAARILQEQLQLFIAFEEQEEDKQVKTDSLPFSPYLLKRVDELELSVRSANCLKNDNIIYIGDLVKRTESDMLRTPNFGRKSLNEIKEILAKFNLRFGMDVPDWPPENIQELSKRYEDSYN.

The tract at residues 1-236 is alpha N-terminal domain (alpha-NTD); that stretch reads MLSLSKNWNT…EQLQLFIAFE (236 aa). The alpha C-terminal domain (alpha-CTD) stretch occupies residues 251–340; the sequence is FSPYLLKRVD…LSKRYEDSYN (90 aa).

Belongs to the RNA polymerase alpha chain family. Homodimer. The RNAP catalytic core consists of 2 alpha, 1 beta, 1 beta' and 1 omega subunit. When a sigma factor is associated with the core the holoenzyme is formed, which can initiate transcription.

It catalyses the reaction RNA(n) + a ribonucleoside 5'-triphosphate = RNA(n+1) + diphosphate. Functionally, DNA-dependent RNA polymerase catalyzes the transcription of DNA into RNA using the four ribonucleoside triphosphates as substrates. This chain is DNA-directed RNA polymerase subunit alpha, found in Rickettsia typhi (strain ATCC VR-144 / Wilmington).